Reading from the N-terminus, the 179-residue chain is Large ribosomal subunit protein bL25 (179 aa).

Belongs to the bacterial ribosomal protein bL25 family. CTC subfamily. In terms of assembly, part of the 50S ribosomal subunit; part of the 5S rRNA/L5/L18/L25 subcomplex. Contacts the 5S rRNA. Binds to the 5S rRNA independently of L5 and L18.

In terms of biological role, this is one of the proteins that binds to the 5S RNA in the ribosome where it forms part of the central protuberance. The polypeptide is Large ribosomal subunit protein bL25 (Desulfitobacterium hafniense (strain DSM 10664 / DCB-2)).